The primary structure comprises 668 residues: MIPKKLVHFEYIQINLASPERILQWGQRTLSNGEIVGEVTRSETINYRTLKPEMDGLFCERIFGPVKDWECHCGRYKRVRYNKNSEISIVCERCGVEVIESGVRRHRMGHIKLASPVTHVWYLKGIPSYISVILGMPRKDVENIVYYNNNDSISFKNISQFLTENRFFSNSTDILDDLLNIKEKEEEISGGEAIYKMLKNFDLKATAQKIREDLAENEAAWTQSSFFNGEDSDWVLDENQWNKKNQDWQIEEERRNKKRNKLIKRLRIINHFIATGAKPEWMVLSILPVLPPELRPMVQLDGGRFATSDLNDLYRRVINRNNRLAKLNNMLAPEIVVRSEKRMLQESVDALIDNGKRGKALVGNNKIPLKSLSDIIKGKQGRFRQNLLGKRVDYSGRSVIVVGPNLKLHQCGLPKEMAIELFQPFVIHTLINEGLANNIKGAKKIIQNSDPILWEILNQVIQGHPVLLNRAPTLHRLGIQAFEPILVEGRAIQLHPLVCPAFNADFDGDQMAVHIPLSLEAQTEARLLMLASSNLLSPATGLPIISPSQDMVLGCYYLTTEDIRLRGTKSHYFSSLEQVIMAYDQKKINLHTIVWVRFSGIIDSKYIKQNPIEIRVDSLGFVSYIYKNYQMRKDFKNNLISQYIRTTPGRILFNQVIQNSLDYSPSEY.

Zn(2+) is bound by residues Cys71, Cys73, Cys91, and Cys94. The Mg(2+) site is built by Asp505, Asp507, and Asp509.

It belongs to the RNA polymerase beta' chain family. RpoC1 subfamily. As to quaternary structure, in plastids the minimal PEP RNA polymerase catalytic core is composed of four subunits: alpha, beta, beta', and beta''. When a (nuclear-encoded) sigma factor is associated with the core the holoenzyme is formed, which can initiate transcription. It depends on Mg(2+) as a cofactor. Zn(2+) serves as cofactor.

Its subcellular location is the plastid. The protein localises to the chloroplast. The catalysed reaction is RNA(n) + a ribonucleoside 5'-triphosphate = RNA(n+1) + diphosphate. Its function is as follows. DNA-dependent RNA polymerase catalyzes the transcription of DNA into RNA using the four ribonucleoside triphosphates as substrates. The sequence is that of DNA-directed RNA polymerase subunit beta' from Mesostigma viride (Green alga).